Consider the following 289-residue polypeptide: uncharacterized protein (289 aa).

The next 9 membrane-spanning stretches (helical) occupy residues 4 to 24, 44 to 64, 68 to 88, 106 to 126, 138 to 158, 166 to 186, 196 to 216, 230 to 250, and 258 to 278; these read NLLA…GTVV, LNAL…LAYF, VALG…SLMF, IFWA…GRPL, IPVL…AEYV, ILGL…KAAV, GLIL…GTIV, LPAM…LVLG, and WEWI…IALS.

The protein resides in the cell membrane. This is an uncharacterized protein from Corynebacterium glutamicum (strain ATCC 13032 / DSM 20300 / JCM 1318 / BCRC 11384 / CCUG 27702 / LMG 3730 / NBRC 12168 / NCIMB 10025 / NRRL B-2784 / 534).